The chain runs to 202 residues: Endothelin-1 (202 aa).

A signal peptide spans 1–25 (MDYFPVIFSLLFVTFQGAPETAVLG). Residues 26 to 50 (AELSTGAENGVQSPPPSTPWRPRRS) constitute a propeptide that is removed on maturation. 2 cysteine pairs are disulfide-bonded: Cys-53–Cys-67 and Cys-55–Cys-63. The propeptide occupies 74-202 (VNTPERVVPY…DQKLTHNRAH (129 aa)). Residues 110 to 124 (CQCAHQKDKKCWNFC) are endothelin-like.

The protein belongs to the endothelin/sarafotoxin family. In terms of tissue distribution, highest expression in the adult is in lung. Lower levels found in heart, kidney, brain and intestine. In the embryo, expressed in outer and inner pharyngeal arch surfaces. Also expressed in endothelium of dorsal aorta and arch arteries, and in epithelium of pharyngeal pouches.

It is found in the secreted. Its function is as follows. Endothelins are endothelium-derived vasoconstrictor peptides. Probable ligand for G-protein coupled receptors EDNRA and EDNRB which activates PTK2B, BCAR1, BCAR3 and, GTPases RAP1 and RHOA cascade in glomerular mesangial cells. Also binds the DEAR/FBXW7-AS1 receptor. Promotes mesenteric arterial wall remodeling via activation of ROCK signaling and subsequent colocalization of NFATC3 with F-actin filaments. NFATC3 then translocates to the nucleus where it subsequently promotes the transcription of the smooth muscle hypertrophy and differentiation marker ACTA2. This chain is Endothelin-1 (Edn1), found in Mus musculus (Mouse).